We begin with the raw amino-acid sequence, 880 residues long: Probable receptor-like protein kinase At5g38990 (880 aa).

The first 21 residues, Met-1–Ala-21, serve as a signal peptide directing secretion. The Extracellular portion of the chain corresponds to Ser-22 to Pro-440. N-linked (GlcNAc...) asparagine glycosylation is found at Asn-46, Asn-136, Asn-158, Asn-210, Asn-256, Asn-263, Asn-297, and Asn-324. Residues Ile-441–Leu-461 form a helical membrane-spanning segment. Residues Val-462–Arg-880 lie on the Cytoplasmic side of the membrane. A disordered region spans residues Asn-471–Leu-505. Composition is skewed to polar residues over residues Glu-472 to Trp-487 and Thr-494 to Leu-505. Positions Phe-525 to Ala-810 constitute a Protein kinase domain. ATP is bound by residues Ile-531–Val-539 and Lys-554. Residue Asp-653 is the Proton acceptor of the active site. Positions Leu-820–Val-846 are disordered.

The protein belongs to the protein kinase superfamily. Ser/Thr protein kinase family.

The protein resides in the membrane. The sequence is that of Probable receptor-like protein kinase At5g38990 from Arabidopsis thaliana (Mouse-ear cress).